The following is an 89-amino-acid chain: Small ribosomal subunit protein uS15 (89 aa).

Belongs to the universal ribosomal protein uS15 family. In terms of assembly, part of the 30S ribosomal subunit. Forms a bridge to the 50S subunit in the 70S ribosome, contacting the 23S rRNA.

In terms of biological role, one of the primary rRNA binding proteins, it binds directly to 16S rRNA where it helps nucleate assembly of the platform of the 30S subunit by binding and bridging several RNA helices of the 16S rRNA. Its function is as follows. Forms an intersubunit bridge (bridge B4) with the 23S rRNA of the 50S subunit in the ribosome. This is Small ribosomal subunit protein uS15 from Orientia tsutsugamushi (strain Ikeda) (Rickettsia tsutsugamushi).